Reading from the N-terminus, the 102-residue chain is Large ribosomal subunit protein bL21 (102 aa).

It belongs to the bacterial ribosomal protein bL21 family. Part of the 50S ribosomal subunit. Contacts protein L20.

Its function is as follows. This protein binds to 23S rRNA in the presence of protein L20. This chain is Large ribosomal subunit protein bL21, found in Solidesulfovibrio magneticus (strain ATCC 700980 / DSM 13731 / RS-1) (Desulfovibrio magneticus).